Reading from the N-terminus, the 392-residue chain is Proteasome-activating nucleotidase (392 aa).

Residues 19 to 53 (IVRLLEEKIESLTKELEKLRQDLNWYKGELEKLLA) adopt a coiled-coil conformation. ATP contacts are provided by residues 178-183 (GTGKTL) and Tyr-317. The docks into pockets in the proteasome alpha-ring to cause gate opening stretch occupies residues 390 to 392 (KYV).

This sequence belongs to the AAA ATPase family. As to quaternary structure, homohexamer. The hexameric complex has a two-ring architecture resembling a top hat that caps the 20S proteasome core at one or both ends. Upon ATP-binding, the C-terminus of PAN interacts with the alpha-rings of the proteasome core by binding to the intersubunit pockets.

It localises to the cytoplasm. ATPase which is responsible for recognizing, binding, unfolding and translocation of substrate proteins into the archaeal 20S proteasome core particle. Is essential for opening the gate of the 20S proteasome via an interaction with its C-terminus, thereby allowing substrate entry and access to the site of proteolysis. Thus, the C-termini of the proteasomal ATPase function like a 'key in a lock' to induce gate opening and therefore regulate proteolysis. Unfolding activity requires energy from ATP hydrolysis, whereas ATP binding alone promotes ATPase-20S proteasome association which triggers gate opening, and supports translocation of unfolded substrates. This is Proteasome-activating nucleotidase from Sulfurisphaera tokodaii (strain DSM 16993 / JCM 10545 / NBRC 100140 / 7) (Sulfolobus tokodaii).